The chain runs to 37 residues: Large ribosomal subunit protein bL36 (37 aa).

This sequence belongs to the bacterial ribosomal protein bL36 family.

This chain is Large ribosomal subunit protein bL36, found in Variovorax paradoxus (strain S110).